Here is a 211-residue protein sequence, read N- to C-terminus: MSSLTYLKKYELPPLPYNLDALEPYISKEIIDVHYNGHHRGYVNGANSFVDRVNKILKGEISSGQYDIQGLLRGLVFNINGHKLHSLYWQNMAPAGKGGGKPGGVIGDLIEKQYGSFEKFKALFTEAANSLPGTGWTVLYYEVENGNLQIMTFENHFQNHIAELPILLILDEFEHAYYLQYKNKRADYVNNWWNLVNWDFADKKLQQYMKK.

Positions 34, 85, 171, and 175 each coordinate Fe cation.

This sequence belongs to the iron/manganese superoxide dismutase family. It depends on Fe cation as a cofactor.

The enzyme catalyses 2 superoxide + 2 H(+) = H2O2 + O2. Destroys superoxide anion radicals which are normally produced within the cells and which are toxic to biological systems. The sequence is that of Superoxide dismutase [Fe] (sod) from Acidianus ambivalens (Desulfurolobus ambivalens).